Reading from the N-terminus, the 577-residue chain is Aspartate--tRNA(Asp/Asn) ligase (577 aa).

Glu-171 lines the L-aspartate pocket. Residues Gln-195–Lys-198 form an aspartate region. Arg-217 contacts L-aspartate. Residues Arg-217–Glu-219 and Gln-226 each bind ATP. His-444 contributes to the L-aspartate binding site. Glu-474 contacts ATP. An L-aspartate-binding site is contributed by Arg-481. ATP is bound at residue Gly-526–Arg-529.

It belongs to the class-II aminoacyl-tRNA synthetase family. Type 1 subfamily. Homodimer.

It localises to the cytoplasm. It catalyses the reaction tRNA(Asx) + L-aspartate + ATP = L-aspartyl-tRNA(Asx) + AMP + diphosphate. Aspartyl-tRNA synthetase with relaxed tRNA specificity since it is able to aspartylate not only its cognate tRNA(Asp) but also tRNA(Asn). Reaction proceeds in two steps: L-aspartate is first activated by ATP to form Asp-AMP and then transferred to the acceptor end of tRNA(Asp/Asn). The polypeptide is Aspartate--tRNA(Asp/Asn) ligase (Helicobacter pylori (strain Shi470)).